Reading from the N-terminus, the 365-residue chain is Mitogen-activated protein kinase p38b (365 aa).

In terms of domain architecture, Protein kinase spans 24-311; sequence YQNLQPVGQG…AEQALAHPYM (288 aa). ATP-binding positions include 30-38 and Lys53; that span reads VGQGAYGQV. The active-site Proton acceptor is the Asp153. A Phosphothreonine modification is found at Thr183. Positions 183–185 match the TXY motif; that stretch reads TGY. Tyr185 is subject to Phosphotyrosine.

It belongs to the protein kinase superfamily. CMGC Ser/Thr protein kinase family. MAP kinase subfamily. It depends on Mg(2+) as a cofactor. Post-translationally, dually phosphorylated on Thr-183 and Tyr-185, which activates the enzyme. In terms of tissue distribution, at mid-embryogenesis, highest expression is seen in developing anterior and posterior midguts. Almost ubiquitous expression throughout all development.

The protein localises to the nucleus. It catalyses the reaction L-seryl-[protein] + ATP = O-phospho-L-seryl-[protein] + ADP + H(+). It carries out the reaction L-threonyl-[protein] + ATP = O-phospho-L-threonyl-[protein] + ADP + H(+). Activated by threonine and tyrosine phosphorylation by Mkk3. In terms of biological role, kinase involved in dpp signal transduction pathway in the process of wing morphogenesis when the levels of dpp are enhanced or inhibited. May down-regulate insect immunity gene expression after prolonged infection. The protein is Mitogen-activated protein kinase p38b of Drosophila melanogaster (Fruit fly).